A 141-amino-acid chain; its full sequence is Nucleoside diphosphate kinase (141 aa).

ATP-binding residues include K11, F59, R87, T93, R104, and N114. The active-site Pros-phosphohistidine intermediate is H117.

It belongs to the NDK family. In terms of assembly, homotetramer. Requires Mg(2+) as cofactor.

The protein localises to the cytoplasm. The enzyme catalyses a 2'-deoxyribonucleoside 5'-diphosphate + ATP = a 2'-deoxyribonucleoside 5'-triphosphate + ADP. It carries out the reaction a ribonucleoside 5'-diphosphate + ATP = a ribonucleoside 5'-triphosphate + ADP. Its function is as follows. Major role in the synthesis of nucleoside triphosphates other than ATP. The ATP gamma phosphate is transferred to the NDP beta phosphate via a ping-pong mechanism, using a phosphorylated active-site intermediate. The polypeptide is Nucleoside diphosphate kinase (Ralstonia pickettii (strain 12J)).